The primary structure comprises 211 residues: Riboflavin transporter RibU (211 aa).

5 helical membrane passes run 34–54 (AYIA…FPLI), 66–86 (ILPV…GVLL), 104–124 (IGLP…SYFW), 134–154 (ILGS…LNYI), and 180–200 (AMVV…FALI).

The protein belongs to the prokaryotic riboflavin transporter (P-RFT) (TC 2.A.87) family. As to quaternary structure, forms a stable energy-coupling factor (ECF) transporter complex composed of 2 membrane-embedded substrate-binding proteins (S component), 2 ATP-binding proteins (A component) and 2 transmembrane proteins (T component) upon coexpression of the 4 components in E.coli.

The protein resides in the cell membrane. Functionally, substrate-binding (S) component of an energy-coupling factor (ECF) ABC-transporter complex. Mediates riboflavin uptake, may also transport FMN and roseoflavin. Probably a riboflavin-binding protein that interacts with the energy-coupling factor (ECF) ABC-transporter complex. Unlike classic ABC transporters this ECF transporter provides the energy necessary to transport a number of different substrates. The substrates themselves are bound by transmembrane, not extracytoplasmic soluble proteins. Expression of the complex plus RibU in E.coli allows riboflavin uptake. This is Riboflavin transporter RibU (ribU) from Streptococcus thermophilus (strain ATCC BAA-250 / LMG 18311).